The primary structure comprises 628 residues: tRNA uridine 5-carboxymethylaminomethyl modification enzyme MnmG (628 aa).

An FAD-binding site is contributed by glycine 13–glycine 18. NAD(+) is bound at residue glycine 273–phenylalanine 287.

This sequence belongs to the MnmG family. In terms of assembly, homodimer. Heterotetramer of two MnmE and two MnmG subunits. The cofactor is FAD.

Its subcellular location is the cytoplasm. Its function is as follows. NAD-binding protein involved in the addition of a carboxymethylaminomethyl (cmnm) group at the wobble position (U34) of certain tRNAs, forming tRNA-cmnm(5)s(2)U34. This chain is tRNA uridine 5-carboxymethylaminomethyl modification enzyme MnmG, found in Buchnera aphidicola subsp. Acyrthosiphon pisum (strain 5A).